We begin with the raw amino-acid sequence, 216 residues long: Peptide methionine sulfoxide reductase MsrA (216 aa).

The active site involves C54.

This sequence belongs to the MsrA Met sulfoxide reductase family.

The enzyme catalyses L-methionyl-[protein] + [thioredoxin]-disulfide + H2O = L-methionyl-(S)-S-oxide-[protein] + [thioredoxin]-dithiol. The catalysed reaction is [thioredoxin]-disulfide + L-methionine + H2O = L-methionine (S)-S-oxide + [thioredoxin]-dithiol. Has an important function as a repair enzyme for proteins that have been inactivated by oxidation. Catalyzes the reversible oxidation-reduction of methionine sulfoxide in proteins to methionine. This chain is Peptide methionine sulfoxide reductase MsrA, found in Xylella fastidiosa (strain Temecula1 / ATCC 700964).